The chain runs to 740 residues: MPLAQLADPWQKMAVESPSDSAENGQQIMDEPMGEEEINPQTEEVSIKEIAITHHVKEGHEKADPSQFELLKVLGQGSFGKVFLVKKISGSDARQLYAMKVLKKATLKVRDRVRTKMERDILVEVNHPFIVKLHYAFQTEGKLYLILDFLRGGDLFTRLSKEVMFTEEDVKFYLAELALALDHLHSLGIIYRDLKPENILLDEEGHIKLTDFGLSKESIDHEKKAYSFCGTVEYMAPEVVNRRGHTQSADWWSFGVLMFEMLTGTLPFQGKDRKETMTMILKAKLGMPQFLSPEAQSLLRMLFKRNPANRLGAGPDGVEEIKRHSFFSTIDWNKLYRREIHPPFKPATGRPEDTFYFDPEFTAKTPKDSPGIPPSANAHQLFRGFSFVAITSDDESQAMQTVGVHSIVQQLHRNSIQFTDGYEVKEDIGVGSYSVCKRCIHKATNMEFAVKIIDKSKRDPTEEIEILLRYGQHPNIITLKDVYDDGKYVYVVTELMKGGELLDKILRQKFFSEREASAVLFTITKTVEYLHAQGVVHRDLKPSNILYVDESGNPESIRICDFGFAKQLRAENGLLMTPCYTANFVAPEVLKRQGYDAACDIWSLGVLLYTMLTGYTPFANGPDDTPEEILARIGSGKFSLSGGYWNSVSDTAKDLVSKMLHVDPHQRLTAALVLRHPWIVHWDQLPQYQLNRQDAPHLVKGAMAATYSALNRNQSPVLEPVGRSTLAQRRGIKKITSTAL.

Residues 1–38 (MPLAQLADPWQKMAVESPSDSAENGQQIMDEPMGEEEI) form a disordered region. Positions 18 to 27 (PSDSAENGQQ) are enriched in polar residues. Residues 68 to 327 (FELLKVLGQG…VEEIKRHSFF (260 aa)) form the Protein kinase 1 domain. ATP is bound by residues 74–82 (LGQGSFGKV) and K100. The active-site Proton acceptor is the D193. Residue S227 is modified to Phosphoserine; by PDPK1. One can recognise an AGC-kinase C-terminal domain in the interval 328–397 (STIDWNKLYR…VAITSDDESQ (70 aa)). T365 carries the phosphothreonine modification. Phosphoserine is present on residues S369 and S375. Position 386 is a phosphoserine; by autocatalysis and MAPKAPK2 (S386). S415 is modified (phosphoserine). Positions 422–679 (YEVKEDIGVG…AALVLRHPWI (258 aa)) constitute a Protein kinase 2 domain. ATP is bound by residues 428–436 (IGVGSYSVC) and K451. Y529 carries the post-translational modification Phosphotyrosine; by FGFR3. Catalysis depends on D539, which acts as the Proton acceptor. 2 positions are modified to phosphoserine: S556 and S715.

The protein belongs to the protein kinase superfamily. AGC Ser/Thr protein kinase family. S6 kinase subfamily. As to quaternary structure, forms a complex with either MAPK1/ERK2 or MAPK3/ERK1 in quiescent cells. Transiently dissociates following mitogenic stimulation. Interacts with NFATC4, ETV1/ER81 and FGFR1. The cofactor is Mg(2+). Post-translationally, activated by phosphorylation at Ser-227 by PDPK1. Autophosphorylated on Ser-386, as part of the activation process. May be phosphorylated at Thr-365 and Ser-369 by MAPK1/ERK2 and MAPK3/ERK1. Can also be activated via phosphorylation at Ser-386 by MAPKAPK2. In terms of processing, N-terminal myristoylation results in an activated kinase in the absence of added growth factors. As to expression, expressed in many tissues, highest levels in skeletal muscle.

Its subcellular location is the nucleus. It localises to the cytoplasm. It catalyses the reaction L-seryl-[protein] + ATP = O-phospho-L-seryl-[protein] + ADP + H(+). The enzyme catalyses L-threonyl-[protein] + ATP = O-phospho-L-threonyl-[protein] + ADP + H(+). With respect to regulation, upon extracellular signal or mitogen stimulation, phosphorylated at Thr-577 in the C-terminal kinase domain (CTKD) by MAPK1/ERK2 and MAPK3/ERK1. The activated CTKD then autophosphorylates Ser-386, allowing binding of PDPK1, which in turn phosphorylates Ser-227 in the N-terminal kinase domain (NTDK) leading to the full activation of the protein and subsequent phosphorylation of the substrates by the NTKD. Serine/threonine-protein kinase that acts downstream of ERK (MAPK1/ERK2 and MAPK3/ERK1) signaling and mediates mitogenic and stress-induced activation of the transcription factors CREB1, ETV1/ER81 and NR4A1/NUR77, regulates translation through RPS6 and EIF4B phosphorylation, and mediates cellular proliferation, survival, and differentiation by modulating mTOR signaling and repressing pro-apoptotic function of BAD and DAPK1. In fibroblast, is required for EGF-stimulated phosphorylation of CREB1 and histone H3 at 'Ser-10', which results in the subsequent transcriptional activation of several immediate-early genes. In response to mitogenic stimulation (EGF and PMA), phosphorylates and activates NR4A1/NUR77 and ETV1/ER81 transcription factors and the cofactor CREBBP. Upon insulin-derived signal, acts indirectly on the transcription regulation of several genes by phosphorylating GSK3B at 'Ser-9' and inhibiting its activity. Phosphorylates RPS6 in response to serum or EGF via an mTOR-independent mechanism and promotes translation initiation by facilitating assembly of the preinitiation complex. In response to insulin, phosphorylates EIF4B, enhancing EIF4B affinity for the EIF3 complex and stimulating cap-dependent translation. Is involved in the mTOR nutrient-sensing pathway by directly phosphorylating TSC2 at 'Ser-1798', which potently inhibits TSC2 ability to suppress mTOR signaling, and mediates phosphorylation of RPTOR, which regulates mTORC1 activity and may promote rapamycin-sensitive signaling independently of the PI3K/AKT pathway. Mediates cell survival by phosphorylating the pro-apoptotic proteins BAD and DAPK1 and suppressing their pro-apoptotic function. Promotes the survival of hepatic stellate cells by phosphorylating CEBPB in response to the hepatotoxin carbon tetrachloride (CCl4). Is involved in cell cycle regulation by phosphorylating the CDK inhibitor CDKN1B, which promotes CDKN1B association with 14-3-3 proteins and prevents its translocation to the nucleus and inhibition of G1 progression. In LPS-stimulated dendritic cells, is involved in TLR4-induced macropinocytosis, and in myeloma cells, acts as effector of FGFR3-mediated transformation signaling, after direct phosphorylation at Tyr-529 by FGFR3. Negatively regulates EGF-induced MAPK1/3 phosphorylation via phosphorylation of SOS1. Phosphorylates SOS1 at 'Ser-1134' and 'Ser-1161' that create YWHAB and YWHAE binding sites and which contribute to the negative regulation of MAPK1/3 phosphorylation. Phosphorylates EPHA2 at 'Ser-897', the RPS6KA-EPHA2 signaling pathway controls cell migration. Acts as a regulator of osteoblast differentiation by mediating phosphorylation of ATF4, thereby promoting ATF4 transactivation activity. This is Ribosomal protein S6 kinase alpha-3 (RPS6KA3) from Homo sapiens (Human).